The primary structure comprises 734 residues: Ribosome-releasing factor 2, mitochondrial (734 aa).

The transit peptide at 1–25 (MLQYCLLRRYRFLLRQHAQVIKRCY) directs the protein to the mitochondrion. The tr-type G domain maps to 27–303 (GDIRNIGILA…AVNAYLPMPE (277 aa)). Residues 36–43 (AHIDAGKT), 100–104 (DTPGH), and 154–157 (NKMD) each bind GTP.

Belongs to the TRAFAC class translation factor GTPase superfamily. Classic translation factor GTPase family. EF-G/EF-2 subfamily.

Its subcellular location is the mitochondrion. Mitochondrial GTPase that mediates the disassembly of ribosomes from messenger RNA at the termination of mitochondrial protein biosynthesis. Not involved in the GTP-dependent ribosomal translocation step during translation elongation. The sequence is that of Ribosome-releasing factor 2, mitochondrial from Drosophila grimshawi (Hawaiian fruit fly).